A 252-amino-acid chain; its full sequence is Probable transcriptional regulatory protein TW504 (252 aa).

Belongs to the TACO1 family.

Its subcellular location is the cytoplasm. In Tropheryma whipplei (strain TW08/27) (Whipple's bacillus), this protein is Probable transcriptional regulatory protein TW504.